The primary structure comprises 799 residues: MSYKVNSSYPDSIPPTEQPYMASQYKQDLQSNIAMATNSEQQRQQQQQQQQQQQQWINQPTAENSDLKEKMNCKNTLNEYIFDFLTKSSLKNTAAAFAQDAHLDRDKGQNPVDGPKSKENNGNQNTFSKVVDTPQGFLYEWWQIFWDIFNTSSSRGGSEFAQQYYQLVLQEQRQEQIYRSLAVHAARLQHDAERRGEYSNEDIDPMHLAAMMLGNPMAPAVQMRNVNMNPIPIPMVGNPIVNNFSIPPYNNANPTTGATAVAPTAPPSGDFTNVGPTQNRSQNVTGWPVYNYPMQPTTENPVGNPCNNNTTNNTTNNKSPVNQPKSLKTMHSTDKPNNVPTSKSTRSRSATSKAKGKVKAGLVAKRRRKNNTATVSAGSTNAGSPNITTPGSTTSEPAMVGSRVNKTPRSDIATNFRNQAIIFGEEDIYSNSKSSPSLDGASPSALASKQPTKVRKNTKKASTSAFPVESTNKLGGNSVVTGKKRSPPNTRVSRRKSTPSVILNADATKDENNMLRTFSNTIAPNIHSAPPTKTANSLPFPGINLGSFNKPAVSSPLSSVTESCFDPESGKIAGKNGPKRAVNSKVSASSPLSIATPRSGDAQKQRSSKVPGNVVIKPPHGFSTTNLNITLKNSKIITSQNNTVSQELPNGGNILEAQVGNDSRSSKGNRNTLSTPEEKKPSSNNQGYDFDALKNSSSLLFPNQAYASNNRTPNENSNVADETSASTNSGDNDNTLIQPSSNVGTTLGPQQTSTNENQNVHSQNLKFGNIGMVEDQGPDYDLNLLDTNENDFNFINWEG.

Positions 1-10 (MSYKVNSSYP) are enriched in polar residues. Disordered stretches follow at residues 1–22 (MSYKVNSSYPDSIPPTEQPYMA), 37–68 (TNSEQQRQQQQQQQQQQQQWINQPTAENSDLK), 101–127 (AHLDRDKGQNPVDGPKSKENNGNQNTF), 255–406 (TTGA…RVNK), 431–501 (NSKS…TPSV), 568–621 (ESGK…PPHG), 644–691 (VSQE…YDFD), and 705–758 (AYAS…NENQ). Low complexity predominate over residues 41–55 (QQRQQQQQQQQQQQQ). The 33-residue stretch at 73 to 105 (CKNTLNEYIFDFLTKSSLKNTAAAFAQDAHLDR) folds into the LisH domain. Positions 270–285 (DFTNVGPTQNRSQNVT) are enriched in polar residues. Low complexity predominate over residues 307 to 317 (NNNTTNNTTNN). Residues 318-340 (KSPVNQPKSLKTMHSTDKPNNVP) are compositionally biased toward polar residues. Residues 341 to 353 (TSKSTRSRSATSK) are compositionally biased toward low complexity. Residues 354-370 (AKGKVKAGLVAKRRRKN) show a composition bias toward basic residues. 2 stretches are compositionally biased toward polar residues: residues 371–396 (NTATVSAGSTNAGSPNITTPGSTTSE) and 460–480 (KASTSAFPVESTNKLGGNSVV). Basic residues predominate over residues 482-497 (GKKRSPPNTRVSRRKS). Composition is skewed to polar residues over residues 584–593 (SKVSASSPLS) and 660–675 (GNDSRSSKGNRNTLST).

This sequence belongs to the FLO8 family.

The protein localises to the nucleus. Required for diploid filamentous growth, haploid invasive growth and flocculation. Putative transcriptional activator of FLO1. The chain is Transcriptional activator FLO8 (FLO8) from Saccharomyces cerevisiae (strain RM11-1a) (Baker's yeast).